An 89-amino-acid polypeptide reads, in one-letter code: Small ribosomal subunit protein uS15 (89 aa).

The protein belongs to the universal ribosomal protein uS15 family. In terms of assembly, part of the 30S ribosomal subunit. Forms a bridge to the 50S subunit in the 70S ribosome, contacting the 23S rRNA.

One of the primary rRNA binding proteins, it binds directly to 16S rRNA where it helps nucleate assembly of the platform of the 30S subunit by binding and bridging several RNA helices of the 16S rRNA. Its function is as follows. Forms an intersubunit bridge (bridge B4) with the 23S rRNA of the 50S subunit in the ribosome. The sequence is that of Small ribosomal subunit protein uS15 from Bacillus licheniformis (strain ATCC 14580 / DSM 13 / JCM 2505 / CCUG 7422 / NBRC 12200 / NCIMB 9375 / NCTC 10341 / NRRL NRS-1264 / Gibson 46).